The sequence spans 485 residues: MTITPQQLIALLPLLIVGLTVVVVMLGIAWRRDHFINATLTVIGLNLALLSLYFVGQAGPMDVTPLLRVDGYSMFYTGLVILASLATCTFAYPWLVGYPDNREEFYLLVLIATLGGILLASANHLASLFLGIELISLPLFGLVGYAYRQKRPLEAAIKYMLLSAAASSFLLFGMALLYAESGDLSLAGLGKSLQENMMHQPLVLAGMGMMIVGLGFKLSLVPFQLWTPDVYQGAPAPVSTFLATASKIAIFAVVMRLFLYAPAADNEALRMVLSIIAVCSILFGNLMAISQTNIKRLLGYSSIAHLGYLLVALIAVQTHQLSLETAGVYLAGYLFSSLGAFGVVSLMSSPYRGPDADSLFSYRGLFWHKPILSAVMTVMMLSLAGIPMTLGFIGKFFVIAMGVSAHLWWLTGAVVLGSAIGLYYYLRVTVSLFLSAPEALQRDTPNNWALTAGGVVVLISAALVLLLGVYPQPLITLVQMAQPMF.

Transmembrane regions (helical) follow at residues 8-28, 35-55, 78-98, 104-124, 125-145, 159-179, 203-223, 235-255, 271-291, 297-317, 327-347, 374-394, 408-427, and 449-469; these read LIALLPLLIVGLTVVVVMLGI, FINATLTVIGLNLALLSLYFV, GLVILASLATCTFAYPWLVGY, EFYLLVLIATLGGILLASANH, LASLFLGIELISLPLFGLVGY, YMLLSAAASSFLLFGMALLYA, VLAGMGMMIVGLGFKLSLVPF, PAPVSTFLATASKIAIFAVVM, MVLSIIAVCSILFGNLMAISQ, LLGYSSIAHLGYLLVALIAVQ, GVYLAGYLFSSLGAFGVVSLM, AVMTVMMLSLAGIPMTLGFIG, WWLTGAVVLGSAIGLYYYLR, and ALTAGGVVVLISAALVLLLGV.

The protein belongs to the complex I subunit 2 family. In terms of assembly, NDH-1 is composed of 13 different subunits. Subunits NuoA, H, J, K, L, M, N constitute the membrane sector of the complex.

Its subcellular location is the cell inner membrane. The enzyme catalyses a quinone + NADH + 5 H(+)(in) = a quinol + NAD(+) + 4 H(+)(out). Functionally, NDH-1 shuttles electrons from NADH, via FMN and iron-sulfur (Fe-S) centers, to quinones in the respiratory chain. The immediate electron acceptor for the enzyme in this species is believed to be ubiquinone. Couples the redox reaction to proton translocation (for every two electrons transferred, four hydrogen ions are translocated across the cytoplasmic membrane), and thus conserves the redox energy in a proton gradient. This Serratia proteamaculans (strain 568) protein is NADH-quinone oxidoreductase subunit N.